Consider the following 428-residue polypeptide: Acetyltransferase sirH (428 aa).

Residue Asn8 is glycosylated (N-linked (GlcNAc...) asparagine). The next 6 membrane-spanning stretches (helical) occupy residues 33-53 (LLTPIFMAVAVLTTLPPPGPL), 55-75 (VIVGLTAFTSLWLHVLTHWVS), 78-98 (AFFMDAIFMISITVRWLLMFV), 305-325 (LYVGFLVSGVQHYACALLIPS), 329-349 (GWGMFWQMPAYAAVVTVEDIL), and 366-386 (FLGYIWTAYWMTLIYALPVGF).

It belongs to the wax synthase family.

It localises to the membrane. It functions in the pathway polyketide biosynthesis. Its function is as follows. Acetyltransferase; part of the gene cluster that mediates the biosynthesis of asperlin, a polyketide showing anti-inflammatory, antitumor and antibiotic activities. The first step of the asperlin biosynthesis is the production of the intermediate 2,4,6-octatrienoic acid by the highly redusing polyketide synthase alnA with cleavage of the PKS product by the esterase alnB. 2,4,6-octatrienoic acid is further converted to asperlin via several steps involving the remaining enzymes from the cluster. The sequence is that of Acetyltransferase sirH from Emericella nidulans (strain FGSC A4 / ATCC 38163 / CBS 112.46 / NRRL 194 / M139) (Aspergillus nidulans).